The primary structure comprises 657 residues: Matrix metalloproteinase-15 (657 aa).

The first 36 residues, 1–36, serve as a signal peptide directing secretion; the sequence is MGSDRSALGRPGCTGSCLSSRASLLPLLLVLLDCLG. Residues 37 to 127 constitute a propeptide that is removed on maturation; the sequence is HGTASKDAEV…KANLRRRRKR (91 aa). Residues 105–112 carry the Cysteine switch motif; the sequence is PRCGVPDQ. Cys107 is a binding site for Zn(2+). Residues 128 to 614 are Extracellular-facing; that stretch reads YTLTGKAWNN…MEEVVRTVNV (487 aa). An N-linked (GlcNAc...) asparagine glycan is attached at Asn146. Residue His255 coordinates Zn(2+). Glu256 is an active-site residue. Zn(2+)-binding residues include His259 and His265. Residues 295 to 365 form a disordered region; sequence IQQLYGSPDG…ERPDQYGPNI (71 aa). The span at 328 to 337 shows a compositional bias: pro residues; sequence PRPPQPPHPG. Hemopexin repeat units follow at residues 363–411, 412–457, 459–507, and 508–555; these read PNIC…WRGL, PGNI…GTDI, YDRI…QGIP, and TSPK…FMGC. Residues Cys366 and Cys555 are joined by a disulfide bond. A glycan (N-linked (GlcNAc...) asparagine) is linked at Asn414. The segment at 561–599 is disordered; it reads PRSRWPDVARPPFNPNGGAEPEADGDSKEENAGDKDEGS. Positions 585–599 are enriched in basic and acidic residues; sequence GDSKEENAGDKDEGS. Residues 615–635 traverse the membrane as a helical segment; that stretch reads VMVLVPLLLLLCILGLAFALV. Residues 636–657 lie on the Cytoplasmic side of the membrane; the sequence is QMQRKGAPRMLLYCKRSLQEWV.

Belongs to the peptidase M10A family. Zn(2+) serves as cofactor. Requires Ca(2+) as cofactor. Post-translationally, the precursor is cleaved by a furin endopeptidase.

It localises to the membrane. Endopeptidase that degrades various components of the extracellular matrix. May activate progelatinase A. In Mus musculus (Mouse), this protein is Matrix metalloproteinase-15 (Mmp15).